Here is a 197-residue protein sequence, read N- to C-terminus: Phosphoheptose isomerase (197 aa).

In terms of domain architecture, SIS spans 37-197; sequence MLQCLMNDGK…CIDSVLLEGM (161 aa). 52–54 is a binding site for substrate; that stretch reads NGG. Residues His61 and Glu65 each coordinate Zn(2+). Substrate is bound by residues Glu65, 94–95, 120–122, Ser125, and Gln175; these read ND and STS. Positions 175 and 183 each coordinate Zn(2+).

Belongs to the SIS family. GmhA subfamily. As to quaternary structure, homotetramer. Zn(2+) is required as a cofactor.

The protein resides in the cytoplasm. It carries out the reaction 2 D-sedoheptulose 7-phosphate = D-glycero-alpha-D-manno-heptose 7-phosphate + D-glycero-beta-D-manno-heptose 7-phosphate. It participates in carbohydrate biosynthesis; D-glycero-D-manno-heptose 7-phosphate biosynthesis; D-glycero-alpha-D-manno-heptose 7-phosphate and D-glycero-beta-D-manno-heptose 7-phosphate from sedoheptulose 7-phosphate: step 1/1. Functionally, catalyzes the isomerization of sedoheptulose 7-phosphate in D-glycero-D-manno-heptose 7-phosphate. The sequence is that of Phosphoheptose isomerase from Neisseria meningitidis serogroup C (strain 053442).